The chain runs to 532 residues: Type 2 DNA topoisomerase 6 subunit B (532 aa).

ATP-binding positions include asparagine 41, aspartate 75, 96–97 (SK), 105–112 (GMYGLGVK), and lysine 427.

Belongs to the TOP6B family. As to quaternary structure, homodimer. Heterotetramer of two Top6A and two Top6B chains.

The catalysed reaction is ATP-dependent breakage, passage and rejoining of double-stranded DNA.. In terms of biological role, relaxes both positive and negative superturns and exhibits a strong decatenase activity. The sequence is that of Type 2 DNA topoisomerase 6 subunit B from Sulfurisphaera tokodaii (strain DSM 16993 / JCM 10545 / NBRC 100140 / 7) (Sulfolobus tokodaii).